The following is a 187-amino-acid chain: Acireductone dioxygenase (187 aa).

Fe(2+) contacts are provided by H87, H89, E93, and H136. Positions 87, 89, 93, and 136 each coordinate Ni(2+).

The protein belongs to the acireductone dioxygenase (ARD) family. Fe(2+) serves as cofactor. Ni(2+) is required as a cofactor.

It is found in the cytoplasm. The protein localises to the nucleus. It carries out the reaction 1,2-dihydroxy-5-(methylsulfanyl)pent-1-en-3-one + O2 = 4-methylsulfanyl-2-oxobutanoate + formate + 2 H(+). The enzyme catalyses 1,2-dihydroxy-5-(methylsulfanyl)pent-1-en-3-one + O2 = 3-(methylsulfanyl)propanoate + CO + formate + 2 H(+). It functions in the pathway amino-acid biosynthesis; L-methionine biosynthesis via salvage pathway; L-methionine from S-methyl-5-thio-alpha-D-ribose 1-phosphate: step 5/6. Catalyzes 2 different reactions between oxygen and the acireductone 1,2-dihydroxy-3-keto-5-methylthiopentene (DHK-MTPene) depending upon the metal bound in the active site. Fe-containing acireductone dioxygenase (Fe-ARD) produces formate and 2-keto-4-methylthiobutyrate (KMTB), the alpha-ketoacid precursor of methionine in the methionine recycle pathway. Ni-containing acireductone dioxygenase (Ni-ARD) produces methylthiopropionate, carbon monoxide and formate, and does not lie on the methionine recycle pathway. This is Acireductone dioxygenase from Cryptococcus neoformans var. neoformans serotype D (strain JEC21 / ATCC MYA-565) (Filobasidiella neoformans).